Consider the following 309-residue polypeptide: Tagatose-6-phosphate kinase (309 aa).

The protein belongs to the carbohydrate kinase PfkB family. LacC subfamily.

It carries out the reaction D-tagatofuranose 6-phosphate + ATP = D-tagatofuranose 1,6-bisphosphate + ADP + H(+). The protein operates within carbohydrate metabolism; D-tagatose 6-phosphate degradation; D-glyceraldehyde 3-phosphate and glycerone phosphate from D-tagatose 6-phosphate: step 1/2. In Streptococcus pneumoniae (strain Taiwan19F-14), this protein is Tagatose-6-phosphate kinase.